We begin with the raw amino-acid sequence, 152 residues long: Interleukin-3 (152 aa).

An N-terminal signal peptide occupies residues 1–19 (MSRLPVLLLLQLLVRPGLQ). N-linked (GlcNAc...) asparagine glycans are attached at residues N34 and N89. The cysteines at positions 35 and 103 are disulfide-linked.

It belongs to the IL-3 family. In terms of assembly, monomer. In terms of tissue distribution, activated T-cells, mast cells, natural killer cells.

It localises to the secreted. Granulocyte/macrophage colony-stimulating factors are cytokines that act in hematopoiesis by controlling the production, differentiation, and function of 2 related white cell populations of the blood, the granulocytes and the monocytes-macrophages. Its function is as follows. This CSF induces granulocytes, macrophages, mast cells, stem cells, erythroid cells, eosinophils and megakaryocytes. In Pan troglodytes (Chimpanzee), this protein is Interleukin-3 (IL3).